We begin with the raw amino-acid sequence, 124 residues long: UPF0102 protein tll1737 (124 aa).

Belongs to the UPF0102 family.

This is UPF0102 protein tll1737 from Thermosynechococcus vestitus (strain NIES-2133 / IAM M-273 / BP-1).